Here is a 457-residue protein sequence, read N- to C-terminus: Angiopoietin-related protein 6 (457 aa).

An N-terminal signal peptide occupies residues 1–24; it reads MGTARLRKLQLLLLLGAWRALGGA. Coiled coils occupy residues 51–77 and 126–164; these read DSEL…RAAE and LLAE…QHSS. A disordered region spans residues 201-235; it reads SNTSRRLDQTPEHQREQSLRQQGPPSSLLPTGHLA. Asn-202 carries an N-linked (GlcNAc...) asparagine glycan. The segment covering 205-218 has biased composition (basic and acidic residues); the sequence is RRLDQTPEHQREQS. Residues 219 to 229 show a composition bias toward polar residues; the sequence is LRQQGPPSSLL. The Fibrinogen C-terminal domain maps to 238-456; sequence TRPVGPWRDC…KAVMLTRLVR (219 aa). Disulfide bonds link Cys-247–Cys-274 and Cys-397–Cys-410.

Highly expressed in the liver, specifically in hepatocytes, and weakly in the heart. Expressed in hematopoietic cells, platelets and mast cells, and detected at wounded skin.

It is found in the secreted. Functionally, may play a role in the wound healing process. May promote epidermal proliferation, remodeling and regeneration. May promote the chemotactic activity of endothelial cells and induce neovascularization. May counteract high-fat diet-induced obesity and related insulin resistance through increased energy expenditure. The chain is Angiopoietin-related protein 6 (Angptl6) from Mus musculus (Mouse).